A 356-amino-acid chain; its full sequence is Uroporphyrinogen decarboxylase (356 aa).

Coproporphyrinogen I is bound by residues R33, A35, R37, R46, D82, Y159, S214, and H334. The coproporphyrinogen III site is built by R33, A35, and R37. Residues D82, Y159, S214, and H334 each coordinate coproporphyrinogen III.

The protein belongs to the uroporphyrinogen decarboxylase family. Homodimer.

It localises to the cytoplasm. Its subcellular location is the cytosol. It catalyses the reaction uroporphyrinogen III + 4 H(+) = coproporphyrinogen III + 4 CO2. The protein operates within porphyrin-containing compound metabolism; protoporphyrin-IX biosynthesis; coproporphyrinogen-III from 5-aminolevulinate: step 4/4. Its function is as follows. Catalyzes the decarboxylation of four acetate groups of uroporphyrinogen-III to yield coproporphyrinogen-III. This Drosophila melanogaster (Fruit fly) protein is Uroporphyrinogen decarboxylase.